A 222-amino-acid chain; its full sequence is 7-cyano-7-deazaguanine synthase (222 aa).

Phe11 to Leu21 is an ATP binding site. Residues Cys187, Cys195, Cys198, and Cys201 each contribute to the Zn(2+) site.

Belongs to the QueC family. Zn(2+) is required as a cofactor.

The enzyme catalyses 7-carboxy-7-deazaguanine + NH4(+) + ATP = 7-cyano-7-deazaguanine + ADP + phosphate + H2O + H(+). It functions in the pathway purine metabolism; 7-cyano-7-deazaguanine biosynthesis. In terms of biological role, catalyzes the ATP-dependent conversion of 7-carboxy-7-deazaguanine (CDG) to 7-cyano-7-deazaguanine (preQ(0)). The protein is 7-cyano-7-deazaguanine synthase of Actinobacillus pleuropneumoniae serotype 3 (strain JL03).